The sequence spans 224 residues: Ribonuclease T (224 aa).

The Exonuclease domain maps to 32–206; sequence VVVDVETGGF…YDTEKTAELF (175 aa). Mg(2+)-binding residues include D35, E37, H193, and D198. Catalysis depends on H193, which acts as the Proton donor/acceptor.

The protein belongs to the RNase T family. Homodimer. The cofactor is Mg(2+).

In terms of biological role, trims short 3' overhangs of a variety of RNA species, leaving a one or two nucleotide 3' overhang. Responsible for the end-turnover of tRNA: specifically removes the terminal AMP residue from uncharged tRNA (tRNA-C-C-A). Also appears to be involved in tRNA biosynthesis. This is Ribonuclease T from Pseudomonas paraeruginosa (strain DSM 24068 / PA7) (Pseudomonas aeruginosa (strain PA7)).